The following is a 359-amino-acid chain: 3-isopropylmalate dehydrogenase (359 aa).

The substrate site is built by Arg96, Arg106, Arg134, and Asp223. The Mg(2+) site is built by Asp223, Asp247, and Asp251. Residue 281 to 293 participates in NAD(+) binding; sequence GSAPDIAGQGIAN.

This sequence belongs to the isocitrate and isopropylmalate dehydrogenases family. LeuB type 1 subfamily. Homodimer. Mg(2+) is required as a cofactor. The cofactor is Mn(2+).

The protein resides in the cytoplasm. The enzyme catalyses (2R,3S)-3-isopropylmalate + NAD(+) = 4-methyl-2-oxopentanoate + CO2 + NADH. Its pathway is amino-acid biosynthesis; L-leucine biosynthesis; L-leucine from 3-methyl-2-oxobutanoate: step 3/4. Catalyzes the oxidation of 3-carboxy-2-hydroxy-4-methylpentanoate (3-isopropylmalate) to 3-carboxy-4-methyl-2-oxopentanoate. The product decarboxylates to 4-methyl-2 oxopentanoate. The chain is 3-isopropylmalate dehydrogenase from Chromohalobacter salexigens (strain ATCC BAA-138 / DSM 3043 / CIP 106854 / NCIMB 13768 / 1H11).